A 244-amino-acid polypeptide reads, in one-letter code: MLIIPAIDLKDGKCVRLKQGRMDDSTVFSDDPVSMAAQWVDAGARRLHLVDLNGAFAGKPVNGEIVSAIAKAYPDLPIQIGGGIRELDIIEQYLDAGVKYVIIGTKAVKEPAFVEEACRAFPGAVIVGIDAKDGMVATEGWAEVSSVSAVDLAKQFRDAGVSSIVYTDIARDGMMQGVNVEATAALARESGLPVIASGGVTNMDDIRRLATVADSGVIGAITGRAIYEGALDLREAQTYCDSIA.

Asp8 (proton acceptor) is an active-site residue. Asp130 acts as the Proton donor in catalysis.

The protein belongs to the HisA/HisF family.

It localises to the cytoplasm. It catalyses the reaction 1-(5-phospho-beta-D-ribosyl)-5-[(5-phospho-beta-D-ribosylamino)methylideneamino]imidazole-4-carboxamide = 5-[(5-phospho-1-deoxy-D-ribulos-1-ylimino)methylamino]-1-(5-phospho-beta-D-ribosyl)imidazole-4-carboxamide. The protein operates within amino-acid biosynthesis; L-histidine biosynthesis; L-histidine from 5-phospho-alpha-D-ribose 1-diphosphate: step 4/9. This is 1-(5-phosphoribosyl)-5-[(5-phosphoribosylamino)methylideneamino] imidazole-4-carboxamide isomerase from Hahella chejuensis (strain KCTC 2396).